Reading from the N-terminus, the 322-residue chain is 2-oxoglutarate-dependent dioxygenase caaD (322 aa).

Residues 172-279 (TGNAAMFLKL…FAVPAFWHGD (108 aa)) enclose the Fe2OG dioxygenase domain. Fe cation is bound by residues histidine 200, aspartate 202, and histidine 259. Arginine 269 is a 2-oxoglutarate binding site.

This sequence belongs to the iron/ascorbate-dependent oxidoreductase family. The cofactor is Fe(2+).

The protein operates within secondary metabolite biosynthesis. Its function is as follows. 2-oxoglutarate-dependent dioxygenase; part of the gene cluster that produces the acyltetronic acid derivatives carlosic acid, agglomerin F and carlosic acid methyl ether. CaaD catalyzes the sequential oxidations of the terminal C-10 methyl group of the caaC product to form carboxylic acid which is necessary for the biosynthesis of agglomerin F. The chain is 2-oxoglutarate-dependent dioxygenase caaD from Aspergillus niger (strain ATCC MYA-4892 / CBS 513.88 / FGSC A1513).